The following is a 413-amino-acid chain: Multidrug resistance protein MdtA (413 aa).

The N-terminal stretch at 1–20 (MKGSNTFRWAIAIGVVVAAA) is a signal peptide. Disordered stretches follow at residues 31 to 57 (SPTA…RDGP) and 391 to 413 (EPQT…GARA). Residues 397–413 (ADEKSPSRHEGQKGARA) are compositionally biased toward basic and acidic residues.

The protein belongs to the membrane fusion protein (MFP) (TC 8.A.1) family. Part of a tripartite efflux system composed of MdtA, MdtB and MdtC.

The protein resides in the cell inner membrane. The polypeptide is Multidrug resistance protein MdtA (Salmonella typhimurium (strain LT2 / SGSC1412 / ATCC 700720)).